A 341-amino-acid chain; its full sequence is MKALSKLKPEEGIWMVDAPKPEMGHNDLLIKIRKTAICGTDIHIYNWDEWSQKTIPVPMVVGHEYVGEVIDMGIEVRGFDVGDRVSGEGHITCGHCRNCRGGRTHLCRNTSGVGVNRDGAFAEYLVIPAFNAFKIPDDISDDLASIFDPFGNAVHTALSFDLVGEDVLITGAGPIGIMAAAVCRHVGARHVVITDVNEYRLELANKMGATRAVNVAKESLEGVMEELGMTEGFDVGLEMSGVPSAFHSMLDTMNHGGKIAMLGIPGGEMAIDWSKVIFKGLILKGIYGREMFETWYKMASLIQSGLDISPIITHHFKIDDFQQGFDAMRSGQSGKVILNWD.

A Zn(2+)-binding site is contributed by C38. Active-site charge relay system residues include T40 and H43. Zn(2+) is bound by residues H63, E64, C93, C96, C99, and C107. NAD(+) contacts are provided by residues I175, D195, R200, 262 to 264 (LGI), and 286 to 287 (IY).

It belongs to the zinc-containing alcohol dehydrogenase family. In terms of assembly, homotetramer. It depends on Zn(2+) as a cofactor.

It is found in the cytoplasm. It carries out the reaction L-threonine + NAD(+) = (2S)-2-amino-3-oxobutanoate + NADH + H(+). Its pathway is amino-acid degradation; L-threonine degradation via oxydo-reductase pathway; glycine from L-threonine: step 1/2. Catalyzes the NAD(+)-dependent oxidation of L-threonine to 2-amino-3-ketobutyrate. The protein is L-threonine 3-dehydrogenase of Shewanella sediminis (strain HAW-EB3).